A 282-amino-acid polypeptide reads, in one-letter code: HTH-type transcriptional activator RhaR (282 aa).

The HTH araC/xylS-type domain occupies 179–277 (DKLITALANS…GMTPSQWRHL (99 aa)). 2 consecutive DNA-binding regions (H-T-H motif) follow at residues 196-217 (DAFC…RAQT) and 244-267 (ISEI…TRET).

As to quaternary structure, binds DNA as a dimer.

It is found in the cytoplasm. Functionally, activates expression of the rhaSR operon in response to L-rhamnose. The sequence is that of HTH-type transcriptional activator RhaR from Salmonella schwarzengrund (strain CVM19633).